Here is a 259-residue protein sequence, read N- to C-terminus: Small ribosomal subunit protein uS2 (259 aa).

Residues K232–K259 are disordered.

This sequence belongs to the universal ribosomal protein uS2 family.

The sequence is that of Small ribosomal subunit protein uS2 from Maridesulfovibrio salexigens (strain ATCC 14822 / DSM 2638 / NCIMB 8403 / VKM B-1763) (Desulfovibrio salexigens).